Consider the following 181-residue polypeptide: Inorganic pyrophosphatase (181 aa).

Residues Lys-16, Arg-30, and Tyr-42 each coordinate substrate. Mg(2+)-binding residues include Asp-52, Asp-57, and Asp-89. Substrate is bound at residue Tyr-126.

Belongs to the PPase family. Homohexamer. The cofactor is Mg(2+).

It is found in the cytoplasm. It catalyses the reaction diphosphate + H2O = 2 phosphate + H(+). Its function is as follows. Catalyzes the hydrolysis of inorganic pyrophosphate (PPi) forming two phosphate ions. The chain is Inorganic pyrophosphatase from Ureaplasma parvum serovar 3 (strain ATCC 700970).